A 347-amino-acid polypeptide reads, in one-letter code: Isopentenyl-diphosphate delta-isomerase (347 aa).

5 to 6 (RK) contacts substrate. FMN is bound by residues S61, 62-64 (SMT), S92, and N120. 92-94 (SMR) provides a ligand contact to substrate. Q159 provides a ligand contact to substrate. Residue E160 participates in Mg(2+) binding. Residues K189, S214, T219, 269-271 (GLR), and 290-291 (AR) contribute to the FMN site.

This sequence belongs to the IPP isomerase type 2 family. As to quaternary structure, homooctamer. Dimer of tetramers. Requires FMN as cofactor. NADPH is required as a cofactor. Mg(2+) serves as cofactor.

It localises to the cytoplasm. The enzyme catalyses isopentenyl diphosphate = dimethylallyl diphosphate. Functionally, involved in the biosynthesis of isoprenoids. Catalyzes the 1,3-allylic rearrangement of the homoallylic substrate isopentenyl (IPP) to its allylic isomer, dimethylallyl diphosphate (DMAPP). The sequence is that of Isopentenyl-diphosphate delta-isomerase from Thermoplasma volcanium (strain ATCC 51530 / DSM 4299 / JCM 9571 / NBRC 15438 / GSS1).